We begin with the raw amino-acid sequence, 212 residues long: Hydroxyacylglutathione hydrolase GloC (212 aa).

Residues histidine 55, histidine 57, aspartate 59, histidine 60, histidine 132, aspartate 151, and histidine 192 each contribute to the Zn(2+) site.

The protein belongs to the metallo-beta-lactamase superfamily. Glyoxalase II family. Requires Zn(2+) as cofactor.

The catalysed reaction is an S-(2-hydroxyacyl)glutathione + H2O = a 2-hydroxy carboxylate + glutathione + H(+). It catalyses the reaction (R)-S-lactoylglutathione + H2O = (R)-lactate + glutathione + H(+). It participates in secondary metabolite metabolism; methylglyoxal degradation; (R)-lactate from methylglyoxal: step 2/2. Type II glyoxalase, isozyme of GloB, that hydrolyzes (R)-S-lactoylglutathione to (R)-lactate and glutathione. Plays a role in methylglyoxal (MG) detoxification. The chain is Hydroxyacylglutathione hydrolase GloC from Haemophilus influenzae (strain ATCC 51907 / DSM 11121 / KW20 / Rd).